Here is a 162-residue protein sequence, read N- to C-terminus: Lymphocyte antigen 86 (162 aa).

The signal sequence occupies residues 1–20 (MKGFTATLFLWTLIFPSCSG). 3 cysteine pairs are disulfide-bonded: Cys-33–Cys-58, Cys-45–Cys-154, and Cys-102–Cys-112. An N-linked (GlcNAc...) asparagine glycan is attached at Asn-96. Asn-156 is a glycosylation site (N-linked (GlcNAc...) asparagine).

M-shaped tetramer of two CD180-LY86 heterodimers. In terms of tissue distribution, highly expressed in B-cells, monocytes and tonsil.

The protein resides in the secreted. It localises to the extracellular space. May cooperate with CD180 and TLR4 to mediate the innate immune response to bacterial lipopolysaccharide (LPS) and cytokine production. Important for efficient CD180 cell surface expression. This Homo sapiens (Human) protein is Lymphocyte antigen 86 (LY86).